A 112-amino-acid chain; its full sequence is C-X-C motif chemokine 6 (112 aa).

An N-terminal signal peptide occupies residues 1–36 (MRLLSSRAARVSGPSGSLCALLALLLLTPPGPLASA). Disulfide bonds link C48/C74 and C50/C90.

This sequence belongs to the intercrine alpha (chemokine CxC) family.

The protein resides in the secreted. In terms of biological role, chemotactic for neutrophil granulocytes. Signals through binding and activation of its receptors (CXCR1 and CXCR2). In addition to its chemotactic and angiogenic properties, it has strong antibacterial activity against Gram-positive and Gram-negative bacteria (90-fold-higher when compared to CXCL5 and CXCL7). This chain is C-X-C motif chemokine 6 (CXCL6), found in Bos taurus (Bovine).